Consider the following 340-residue polypeptide: Guanine nucleotide-binding protein G(I)/G(S)/G(T) subunit beta-3 (340 aa).

7 WD repeats span residues 53–83, 95–125, 141–170, 182–212, 224–254, 268–298, and 310–340; these read GHLA…IVWD, LRSS…SIYN, AHTG…ALWD, GHTG…KLWD, GHES…RLFD, SIIC…NVWD, and GHDN…KIWN.

This sequence belongs to the WD repeat G protein beta family. As to quaternary structure, g proteins are composed of 3 units, alpha, beta and gamma. Interacts with RASD2.

Guanine nucleotide-binding proteins (G proteins) are involved as a modulator or transducer in various transmembrane signaling systems. The beta and gamma chains are required for the GTPase activity, for replacement of GDP by GTP, and for G protein-effector interaction. The protein is Guanine nucleotide-binding protein G(I)/G(S)/G(T) subunit beta-3 (Gnb3) of Mus musculus (Mouse).